A 992-amino-acid chain; its full sequence is Sorting nexin-19 (992 aa).

One can recognise a PXA domain in the interval 95-272 (ERQLEREINR…VLVGIFSKAR (178 aa)). Residues 410–442 (ALEPKDGEASEGAEAEEGPGTETETGLPVSTLN) form a disordered region. The segment covering 418–428 (ASEGAEAEEGP) has biased composition (acidic residues). One can recognise a PX domain in the interval 533–663 (LRITGTITAR…EFLALNTDAR (131 aa)). Residues Arg582 and Arg629 each coordinate a 1,2-diacyl-sn-glycero-3-phospho-(1D-myo-inositol-3-phosphate). Disordered stretches follow at residues 692 to 726 (FPRSEPQSPTEELSEAETESKPQTEGKKASKSRLR), 778 to 797 (QPTKAPEKDPEQPPKGRVDS), and 973 to 992 (AATTSASDTPGNSKRMGVSS). Composition is skewed to basic and acidic residues over residues 709–719 (TESKPQTEGKK) and 782–795 (APEKDPEQPPKGRV). Polar residues predominate over residues 980 to 992 (DTPGNSKRMGVSS).

The protein belongs to the sorting nexin family. Interacts with PTPRN.

It is found in the early endosome membrane. Its subcellular location is the cytoplasmic vesicle membrane. In terms of biological role, plays a role in intracellular vesicle trafficking and exocytosis. May play a role in maintaining insulin-containing dense core vesicles in pancreatic beta-cells and in preventing their degradation. May play a role in insulin secretion. Interacts with membranes containing phosphatidylinositol 3-phosphate (PtdIns(3P)). The protein is Sorting nexin-19 (SNX19) of Homo sapiens (Human).